Consider the following 156-residue polypeptide: Arginine repressor (156 aa).

Belongs to the ArgR family.

It localises to the cytoplasm. It participates in amino-acid biosynthesis; L-arginine biosynthesis [regulation]. In terms of biological role, regulates arginine biosynthesis genes. The polypeptide is Arginine repressor (Shewanella woodyi (strain ATCC 51908 / MS32)).